A 167-amino-acid polypeptide reads, in one-letter code: Protein FAM163B (167 aa).

A helical transmembrane segment spans residues valine 6–cysteine 26. Serine 40 bears the Phosphoserine mark.

Belongs to the FAM163 family.

It localises to the membrane. The chain is Protein FAM163B (Fam163b) from Mus musculus (Mouse).